Consider the following 667-residue polypeptide: Probable E3 ubiquitin-protein ligase HIP1 (667 aa).

2 disordered regions span residues 142-163 and 285-311; these read NGAS…NGQA and TTAG…RSFR. The segment covering 288–309 has biased composition (low complexity); sequence GLSSSSYDPSGGNNNSGGSQRS. The segment at 620 to 661 adopts an RING-type; atypical zinc-finger fold; it reads CCICQEEYVDGDDLGTLDCGHDFHVGCVRQWLVVKNTCPICK.

The protein belongs to the RING-type zinc finger family. As to quaternary structure, interacts with HAL3.

The catalysed reaction is S-ubiquitinyl-[E2 ubiquitin-conjugating enzyme]-L-cysteine + [acceptor protein]-L-lysine = [E2 ubiquitin-conjugating enzyme]-L-cysteine + N(6)-ubiquitinyl-[acceptor protein]-L-lysine.. It functions in the pathway protein modification; protein ubiquitination. Its function is as follows. Probable E3 ubiquitin-protein ligase that functions downstream of HAL3 and is required for HAL3-regulated plant growth. Activation of HIP1 by HAL3 may lead to the degradation of cell cycle suppressors, resulting in enhancement of cell division and plant growth. The protein is Probable E3 ubiquitin-protein ligase HIP1 (HIP1) of Oryza sativa subsp. japonica (Rice).